Reading from the N-terminus, the 185-residue chain is Elongation factor P (185 aa).

This sequence belongs to the elongation factor P family.

The protein resides in the cytoplasm. The protein operates within protein biosynthesis; polypeptide chain elongation. Functionally, involved in peptide bond synthesis. Stimulates efficient translation and peptide-bond synthesis on native or reconstituted 70S ribosomes in vitro. Probably functions indirectly by altering the affinity of the ribosome for aminoacyl-tRNA, thus increasing their reactivity as acceptors for peptidyl transferase. This is Elongation factor P from Deinococcus radiodurans (strain ATCC 13939 / DSM 20539 / JCM 16871 / CCUG 27074 / LMG 4051 / NBRC 15346 / NCIMB 9279 / VKM B-1422 / R1).